A 404-amino-acid chain; its full sequence is MSKVQVKKVVVAYSGGLDTSVIIPWLKENYDCEVVAFVADVGQGDEELKGVEAKALSSGASECYIVDLKEEFVKEYIYPTLKTGAYYEGKYLLGTSMARPVIAKAQVEIARKVGADALAHGCTGKGNDQVRFEGAFAALAPDLHVIAPWREWDLRSREACLDYLAERNIPCAASLTKIYSRDANAWHVSTEGGVLESTWNAPNEDCWVWTVDPEQAPNEAEYVTLQVAHGEVVAVDGEAMTPYNALLYLNQKGAKHGVGRIDIVENRLVGMKSRGCYETPGGTIIMEALRAVEQLVLDKTSFEFREELGIKASHLVYDGRWFTPLRQAVFAAADELAKDVNGEVVIKLYKGQAVATQKRSANSLYSEDFATFGADEVYDHSHAGGFIRLYSLSSRIRALSQNKQ.

Residues 12–20 and alanine 39 each bind ATP; that span reads AYSGGLDTS. L-citrulline is bound by residues tyrosine 91 and serine 96. Glycine 121 is a binding site for ATP. Positions 123, 127, and 128 each coordinate L-aspartate. An L-citrulline-binding site is contributed by asparagine 127. L-citrulline-binding residues include arginine 131, serine 180, serine 189, glutamate 265, and tyrosine 277.

The protein belongs to the argininosuccinate synthase family. Type 1 subfamily. As to quaternary structure, homotetramer.

Its subcellular location is the cytoplasm. It carries out the reaction L-citrulline + L-aspartate + ATP = 2-(N(omega)-L-arginino)succinate + AMP + diphosphate + H(+). It participates in amino-acid biosynthesis; L-arginine biosynthesis; L-arginine from L-ornithine and carbamoyl phosphate: step 2/3. The protein is Argininosuccinate synthase of Vibrio cholerae serotype O1 (strain ATCC 39541 / Classical Ogawa 395 / O395).